Reading from the N-terminus, the 1285-residue chain is Protein crumbs homolog 2 (1285 aa).

Residues 1–28 (MALARPGTPDPQALASVLLLLLWAPALS) form the signal peptide. Residues 1–350 (MALARPGTPD…GFQCHCPDGY (350 aa)) are required for maximum inhibition of APP amyloid-beta peptide secretion. Residues 67–106 (EPRGCATQPCHHGALCVPQGPDPTGFRCYCVPGFQGPRCE) form the EGF-like 1 domain. Disulfide bonds link C71–C82, C76–C94, C96–C105, C112–C123, C117–C132, C134–C143, C150–C161, C155–C170, C172–C181, C188–C199, C193–C208, C210–C220, C227–C238, C232–C247, C249–C258, C265–C276, C270–C306, C308–C317, C324–C335, C329–C344, C346–C355, C362–C373, C367–C382, C384–C393, C400–C411, C405–C424, and C426–C435. One can recognise an EGF-like 2; calcium-binding domain in the interval 108–144 (DIDECASRPCHHGATCRNLADRYECHCPLGYAGVTCE). The EGF-like 3; calcium-binding domain occupies 146–182 (EVDECASAPCLHGGSCLDGVGSFRCVCAPGYGGTRCQ). In terms of domain architecture, EGF-like 4; calcium-binding spans 184–221 (DLDECQSQPCAHGGTCHDLVNGFRCDCAGTGYEGTHCE). EGF-like domains are found at residues 223-259 (EVLE…ELCE) and 261-318 (DEDE…ADCG). A glycan (N-linked (GlcNAc...) asparagine) is linked at N235. O-linked (Glc...) serine glycosylation occurs at S267. In terms of domain architecture, EGF-like 7; calcium-binding spans 320 to 356 (EVDECASRPCLNGGHCQDLPNGFQCHCPDGYAGPTCE). One can recognise an EGF-like 8; calcium-binding domain in the interval 358–394 (DVDECLSDPCLHGGTCSDTVAGYICRCPETWGGRDCS). One can recognise an EGF-like 9 domain in the interval 396–436 (QLTGCQGHTCPLAATCIPIFESGVHSYVCHCPPGTHGPFCG). A Laminin G-like 1 domain is found at 431-603 (HGPFCGQNTT…DLGENVLLGC (173 aa)). N438 and N478 each carry an N-linked (GlcNAc...) asparagine glycan. 4 cysteine pairs are disulfide-bonded: C579–C603, C609–C620, C614–C629, and C631–C640. Residues 605 to 641 (RREQCRPLPCVHGGSCVDLWTHFRCDCARPHRGPTCA) enclose the EGF-like 10 domain. In terms of domain architecture, Laminin G-like 2 spans 647–805 (ATFGLGGAPS…RQSWNLTAGC (159 aa)). N669, N690, N786, and N800 each carry an N-linked (GlcNAc...) asparagine glycan. 4 disulfides stabilise this stretch: C766/C805, C811/C822, C816/C831, and C833/C842. The EGF-like 11 domain occupies 807 to 843 (SEDMCSPDPCFNGGTCLVTWNDFHCTCPANFTGPTCA). N-linked (GlcNAc...) asparagine glycosylation is found at N836, N886, N926, and N1009. The Laminin G-like 3 domain maps to 871-1054 (EATFREGPPA…PGTPAPILGC (184 aa)). 13 disulfide bridges follow: C1013–C1054, C1060–C1071, C1065–C1080, C1082–C1091, C1098–C1108, C1103–C1118, C1120–C1129, C1138–C1150, C1144–C1159, C1161–C1170, C1177–C1188, C1182–C1197, and C1199–C1208. 4 EGF-like domains span residues 1056–1092 (GAPV…PRCE), 1094–1130 (HVDP…PRCR), 1134–1171 (PSKE…QRCQ), and 1173–1209 (PTLP…QFCE). N-linked (GlcNAc...) asparagine glycosylation is found at N1141 and N1158. A helical transmembrane segment spans residues 1225–1245 (VAVPAACACLLLLLLGLLSGI). The tract at residues 1249-1285 (RKRRQSEGTYSPSQQEVAGARLEMDSVLKVPPEERLI) is interaction with EPB41L5.

It belongs to the Crumbs protein family. In terms of assembly, associates with the gamma-secretase complex via interaction (via the transmembrane domain) with PSEN1/PS1. Interacts (via intracellular domain) with EPB41L5. Interacts with PALS1. Post-translationally, O-glucosylated by POGLUT1 at Ser-267; consists of an O-glucose trisaccharide, in which the O-glucose is elongated by the addition of two xylose residues. O-glucosylation is required for localization at the plasma membrane. N-glycosylated. As to expression, expressed in glomeruli, podocytes of the glomerular capillary loops, and parietal glomerular epithelial cells in the kidney (at protein level). Expressed in retina, fetal eye and brain. Also expressed in kidney, RPE/choroid, and at low levels in lung, placenta, and heart.

It localises to the apical cell membrane. Its subcellular location is the cytoplasm. It is found in the cell junction. The protein localises to the secreted. Apical polarity protein that plays a central role during the epithelial-to-mesenchymal transition (EMT) at gastrulation, when newly specified mesodermal cells move inside the embryo. Acts by promoting cell ingression, the process by which cells leave the epithelial epiblast and move inside the embryo to form a new tissue layer. The anisotropic distribution of CRB2 and MYH10/myosin-IIB at cell edges define which cells will ingress: cells with high apical CRB2 are probably extruded from the epiblast by neighboring cells with high levels of apical MYH10/myosin-IIB. Plays a role in the maintenance of retinal neuroepithelium organization, structural integrity, adhesion, photoreceptor polarity and retinal photoreceptor layer thickness. May play a role in determining the length of cone photoreceptor outer segments and proliferation of late-born progenitor cells. Also required for maintenance of the apical polarity complex during development of the cortex. Inhibits gamma-secretase-dependent cleavage of APP and secretion of amyloid-beta peptide 40 and amyloid-beta peptide 42, and thereby inhibits gamma-secretase-dependent Notch transcription. In Homo sapiens (Human), this protein is Protein crumbs homolog 2.